The sequence spans 440 residues: (S)-N-methylcoclaurine 3'-hydroxylase-like protein (440 aa).

Residues 2–21 traverse the membrane as a helical; Signal-anchor for type II membrane protein segment; that stretch reads EIVTVALIAIVFTTFLYLIV. Position 430 (Cys-430) interacts with heme.

The protein belongs to the cytochrome P450 family. Heme is required as a cofactor.

The protein localises to the membrane. Its function is as follows. Involved in the biosynthesis of benzylisoquinoline alkaloids. Probably involved in papaverine biosynthesis since its transcripts are abundant only in cultivars with substantial papaverine accumulation. May catalyze the 3'-hydroxylation of (S)-coclaurine. The protein is (S)-N-methylcoclaurine 3'-hydroxylase-like protein of Papaver somniferum (Opium poppy).